A 394-amino-acid polypeptide reads, in one-letter code: Outer membrane protein S1 (394 aa).

Positions 1–21 (MNRKVLALLVPALLVAGAANA) are cleaved as a signal peptide. The interval 222 to 242 (SSSDRSDNQVARGYGDGMNER) is disordered.

The protein belongs to the Gram-negative porin family. As to quaternary structure, homotrimer.

The protein resides in the cell outer membrane. Functionally, forms pores that allow passive diffusion of small molecules across the outer membrane. This chain is Outer membrane protein S1 (ompS1), found in Salmonella typhi.